The primary structure comprises 181 residues: Ion-translocating oxidoreductase complex subunit B (181 aa).

Positions Met-1–Ala-26 are hydrophobic. One can recognise a 4Fe-4S domain in the interval Glu-32 to Val-90. [4Fe-4S] cluster contacts are provided by Cys-49, Cys-52, Cys-57, Cys-73, Cys-110, Cys-113, Cys-116, Cys-120, Cys-140, Cys-143, Cys-146, and Cys-150. 4Fe-4S ferredoxin-type domains are found at residues Lys-101–Lys-130 and Gln-131–Val-160.

It belongs to the 4Fe4S bacterial-type ferredoxin family. RnfB subfamily. In terms of assembly, the complex is composed of six subunits: RnfA, RnfB, RnfC, RnfD, RnfE and RnfG. Requires [4Fe-4S] cluster as cofactor.

Its subcellular location is the cell inner membrane. Functionally, part of a membrane-bound complex that couples electron transfer with translocation of ions across the membrane. This Magnetococcus marinus (strain ATCC BAA-1437 / JCM 17883 / MC-1) protein is Ion-translocating oxidoreductase complex subunit B.